A 50-amino-acid polypeptide reads, in one-letter code: Protein hunchback (50 aa).

3 consecutive C2H2-type zinc fingers follow at residues 1 to 5 (HLRNH), 11 to 33 (FKCNKCNYACVNKSMLNSHMKSH), and 39 to 50 (YRCADCTYATKY).

This sequence belongs to the hunchback C2H2-type zinc-finger protein family.

It localises to the nucleus. Gap class segmentation protein that controls development of head structures. This is Protein hunchback (hb) from Platynereis dumerilii (Dumeril's clam worm).